A 543-amino-acid chain; its full sequence is Type I restriction enzyme MpnII methylase subunit (543 aa).

Residues 208–213, 240–242, and glutamate 265 contribute to the S-adenosyl-L-methionine site; these read EFFTPQ and SGS.

This sequence belongs to the N(4)/N(6)-methyltransferase family. As to quaternary structure, the methyltransferase is composed of M and S polypeptides.

It catalyses the reaction a 2'-deoxyadenosine in DNA + S-adenosyl-L-methionine = an N(6)-methyl-2'-deoxyadenosine in DNA + S-adenosyl-L-homocysteine + H(+). The subtype gamma methyltransferase (M) subunit of a type I restriction enzyme. The M and S subunits together form a methyltransferase (MTase) that probably methylates A-2 on the top strand and A-3 on the bottom strand of the sequence 5'-GAN(7)TAY-3'. As the bacterial DNA is methylated on this sequence and this is the only type I methylase in the genome, it is probably responsible for all of the methylation on this site in the genome. The R subunit has multiple frameshifts and is probably not expressed in this bacteria. The polypeptide is Type I restriction enzyme MpnII methylase subunit (Mycoplasma pneumoniae (strain ATCC 29342 / M129 / Subtype 1) (Mycoplasmoides pneumoniae)).